The sequence spans 779 residues: Acyl-CoA dehydrogenase family member 11 (779 aa).

N6-acetyllysine is present on residues lysine 163, lysine 166, and lysine 175. Serine 210 bears the Phosphoserine mark. The residue at position 323 (tyrosine 323) is a Phosphotyrosine. 2 positions are modified to N6-succinyllysine: lysine 368 and lysine 390. Residues 503–513, 511–513, 537–539, and serine 539 each bind FAD; these read FCMTEPNVSSS, SSS, and WSS. Serine 513 provides a ligand contact to substrate. 628–631 lines the substrate pocket; it reads GPGR. Residues arginine 656, glutamine 726, and 726–730 each bind FAD; that span reads QVHGG. Glycine 754 lines the substrate pocket. Residues 755–757 and glutamate 757 contribute to the FAD site; that span reads PDE. Position 765 is an N6-acetyllysine (lysine 765).

It belongs to the acyl-CoA dehydrogenase family. Homodimer. It depends on FAD as a cofactor.

It is found in the peroxisome. It localises to the mitochondrion membrane. It catalyses the reaction a 2,3-saturated acyl-CoA + oxidized [electron-transfer flavoprotein] + H(+) = a (2E)-enoyl-CoA + reduced [electron-transfer flavoprotein]. The enzyme catalyses docosanoyl-CoA + oxidized [electron-transfer flavoprotein] + H(+) = (2E)-docosenoyl-CoA + reduced [electron-transfer flavoprotein]. It carries out the reaction tetracosanoyl-CoA + oxidized [electron-transfer flavoprotein] + H(+) = (2E)-tetracosenoyl-CoA + reduced [electron-transfer flavoprotein]. The catalysed reaction is eicosanoyl-CoA + oxidized [electron-transfer flavoprotein] + H(+) = (2E)-eicosenoyl-CoA + reduced [electron-transfer flavoprotein]. It catalyses the reaction hexacosanoyl-CoA + oxidized [electron-transfer flavoprotein] + H(+) = (2E)-hexacosenoyl-CoA + reduced [electron-transfer flavoprotein]. The enzyme catalyses tricosanoyl-CoA + oxidized [electron-transfer flavoprotein] + H(+) = (2E)-tricosenoyl-CoA + reduced [electron-transfer flavoprotein]. The protein operates within lipid metabolism; fatty acid beta-oxidation. Functionally, acyl-CoA dehydrogenase, that exhibits maximal activity towards saturated C22-CoA. Probably participates in beta-oxydation and energy production but could also play a role in the metabolism of specific fatty acids to control fatty acids composition of cellular lipids in brain. The protein is Acyl-CoA dehydrogenase family member 11 (Acad11) of Mus musculus (Mouse).